A 64-amino-acid chain; its full sequence is Large ribosomal subunit protein uL29 (64 aa).

Belongs to the universal ribosomal protein uL29 family.

This is Large ribosomal subunit protein uL29 from Polynucleobacter necessarius subsp. necessarius (strain STIR1).